Consider the following 125-residue polypeptide: Large ribosomal subunit protein bL12 (125 aa).

Belongs to the bacterial ribosomal protein bL12 family. Homodimer. Part of the ribosomal stalk of the 50S ribosomal subunit. Forms a multimeric L10(L12)X complex, where L10 forms an elongated spine to which 2 to 4 L12 dimers bind in a sequential fashion. Binds GTP-bound translation factors.

In terms of biological role, forms part of the ribosomal stalk which helps the ribosome interact with GTP-bound translation factors. Is thus essential for accurate translation. This chain is Large ribosomal subunit protein bL12, found in Methylorubrum extorquens (strain CM4 / NCIMB 13688) (Methylobacterium extorquens).